Reading from the N-terminus, the 97-residue chain is Large ribosomal subunit protein bL27 (97 aa).

A compositionally biased stretch (polar residues) spans 1-10 (MVKLNLSNLQ). Residues 1–12 (MVKLNLSNLQHF) constitute a propeptide that is removed on maturation. A disordered region spans residues 1 to 38 (MVKLNLSNLQHFAHKKGGGSTSNGRDSQAKRLGAKAAD).

This sequence belongs to the bacterial ribosomal protein bL27 family. The N-terminus is cleaved by ribosomal processing cysteine protease Prp.

The chain is Large ribosomal subunit protein bL27 from Streptococcus equi subsp. zooepidemicus (strain H70).